Here is a 177-residue protein sequence, read N- to C-terminus: MRLPKEGDFITIQSYKHDGSLHRTWRDTMVLKTTENAIIGVNDHTLVTESDGRRWVTREPAIVYFHRKYWFNIIAMIRENGTSYYCNLASPYYLDSEALKYIDYDLDVKVFADGEKRLLDVEEYERHKKKMNYSNDLDYILKENVKILVDWINQERGPFSQAYVNIWYKRYIELKNR.

Arginine 23 acts as the Proton donor in catalysis. Residues asparagine 87, aspartate 103, aspartate 105, aspartate 107, aspartate 120, and glutamate 123 each contribute to the Mg(2+) site.

The protein belongs to the Ntdp family. Requires Mg(2+) as cofactor.

It carries out the reaction a ribonucleoside 5'-triphosphate + H2O = a ribonucleoside 5'-diphosphate + phosphate + H(+). The catalysed reaction is a ribonucleoside 5'-diphosphate + H2O = a ribonucleoside 5'-phosphate + phosphate + H(+). In terms of biological role, has nucleoside phosphatase activity towards nucleoside triphosphates and nucleoside diphosphates. This Streptococcus gordonii (strain Challis / ATCC 35105 / BCRC 15272 / CH1 / DL1 / V288) protein is Nucleoside triphosphate/diphosphate phosphatase.